The sequence spans 181 residues: MKQLLDFIPLIIFFALYKFYDIYVATGALIAATTVQVIVTYAMYKKVEKMQLITFVMVALFGGMTLALHDDNFIKWKVTIVYVVFALGLTISQIMGKPAIKGMLGKELTLPDAVWSTINWAWVMFFSGCAALNLYVAYHLPLDVWVNFKVFGLLAATLVFTLLTGGYIYKHLPHEPKQKNQ.

5 helical membrane passes run 10–30 (LIIFFALYKFYDIYVATGALI), 50–70 (MQLITFVMVALFGGMTLALHD), 80–100 (IVYVVFALGLTISQIMGKPAI), 120–140 (WAWVMFFSGCAALNLYVAYHL), and 148–168 (FKVFGLLAATLVFTLLTGGYI).

Belongs to the YciB family.

The protein resides in the cell inner membrane. Plays a role in cell envelope biogenesis, maintenance of cell envelope integrity and membrane homeostasis. This Vibrio cholerae serotype O1 (strain ATCC 39315 / El Tor Inaba N16961) protein is Inner membrane-spanning protein YciB.